A 340-amino-acid polypeptide reads, in one-letter code: Ferrochelatase (340 aa).

Fe cation contacts are provided by His189 and Glu292.

Belongs to the ferrochelatase family.

It is found in the cytoplasm. The catalysed reaction is heme b + 2 H(+) = protoporphyrin IX + Fe(2+). Its pathway is porphyrin-containing compound metabolism; protoheme biosynthesis; protoheme from protoporphyrin-IX: step 1/1. In terms of biological role, catalyzes the ferrous insertion into protoporphyrin IX. The sequence is that of Ferrochelatase from Pseudomonas aeruginosa (strain UCBPP-PA14).